The chain runs to 515 residues: ATP synthase subunit alpha (515 aa).

Residue 171 to 178 (GDRQTGKT) coordinates ATP.

It belongs to the ATPase alpha/beta chains family. F-type ATPases have 2 components, CF(1) - the catalytic core - and CF(0) - the membrane proton channel. CF(1) has five subunits: alpha(3), beta(3), gamma(1), delta(1), epsilon(1). CF(0) has three main subunits: a(1), b(2) and c(9-12). The alpha and beta chains form an alternating ring which encloses part of the gamma chain. CF(1) is attached to CF(0) by a central stalk formed by the gamma and epsilon chains, while a peripheral stalk is formed by the delta and b chains.

The protein localises to the cell inner membrane. It catalyses the reaction ATP + H2O + 4 H(+)(in) = ADP + phosphate + 5 H(+)(out). Produces ATP from ADP in the presence of a proton gradient across the membrane. The alpha chain is a regulatory subunit. The sequence is that of ATP synthase subunit alpha from Xylella fastidiosa (strain M12).